The chain runs to 492 residues: MRCILLGSGTSTGVPEVGCHCRVCRSEDRHDKRTRTSLLIITDAGKRILIDCSPDFRQQALFAGIDSLDAVLLTHEHFDHVGGLDDLRTICWHRELAVYAEQNVLDSIRDRLHYVFRKNPYPGTPLLKLCEVKPDMPFQVADLTVEPLRIMHGRLPILGYKIGEMAFLTDMKDIAAEEIECLKSCRLLFINGLRYRKEHPSHQTIEQAIDTIGQIGNPESVLIHLSHHAPLHQEHLEILPPHIHSGYDGLEAIIDEKGIRIKDFEPHVSRSEYHYQDCGRIGYESALTLQRKLFHDAVADKLENRKPQNTLLFCEHEPVLTLGKHGHEENLLLSESELKSRDIRLFHIERGGDITYHGPGQITGYPIFDLEQYGIGLRSYIEMLEQCIIDLIAIFGLKGERSAGASGVWLDPDIPGRTRKICAIGVKSSRHITMHGFALNVNTDLDYFKLINPCGFSDRGVTSISRELGREQDFILVKQQLEAVFRRNFGAL.

The interval 1–255 (MRCILLGSGT…GYDGLEAIID (255 aa)) is unknown. The segment at 256–492 (EKGIRIKDFE…AVFRRNFGAL (237 aa)) is lipB domain. The region spanning 305–492 (RKPQNTLLFC…AVFRRNFGAL (188 aa)) is the BPL/LPL catalytic domain. Residues 350 to 357 (RGGDITYH), 423 to 425 (AIG), and 436 to 438 (GFA) contribute to the substrate site. Cys454 serves as the catalytic Acyl-thioester intermediate.

This sequence in the C-terminal section; belongs to the LipB family.

It is found in the cytoplasm. It catalyses the reaction octanoyl-[ACP] + L-lysyl-[protein] = N(6)-octanoyl-L-lysyl-[protein] + holo-[ACP] + H(+). The protein operates within protein modification; protein lipoylation via endogenous pathway; protein N(6)-(lipoyl)lysine from octanoyl-[acyl-carrier-protein]: step 1/2. Catalyzes the transfer of endogenously produced octanoic acid from octanoyl-acyl-carrier-protein onto the lipoyl domains of lipoate-dependent enzymes. Lipoyl-ACP can also act as a substrate although octanoyl-ACP is likely to be the physiological substrate. The sequence is that of Octanoyltransferase from Porphyromonas gingivalis (strain ATCC BAA-308 / W83).